Consider the following 365-residue polypeptide: Carbohydrate sulfotransferase 10 (365 aa).

Over 1 to 6 (MRRHWL) the chain is Cytoplasmic. Residues 7–27 (LVGACGWVLLILMFVSKFINF) traverse the membrane as a helical; Signal-anchor for type II membrane protein segment. At 28–356 (SFRIPGDYAG…RYQGDFSLFD (329 aa)) the chain is on the lumenal side. N-linked (GlcNAc...) asparagine glycosylation is found at Asn99 and Asn104. 3'-phosphoadenylyl sulfate contacts are provided by residues 132–138 (PKVGNTQ) and 194–202 (RDPFERLIS). Residue Asn325 is glycosylated (N-linked (GlcNAc...) asparagine).

This sequence belongs to the sulfotransferase 2 family.

It localises to the golgi apparatus membrane. Its function is as follows. Catalyzes the transfer of sulfate to position 3 of terminal glucuronic acid of both protein- and lipid-linked oligosaccharides. Participates in biosynthesis of HNK-1 carbohydrate structure, a sulfated glucuronyl-lactosaminyl residue carried by many neural recognition molecules. This is Carbohydrate sulfotransferase 10 (chst10) from Danio rerio (Zebrafish).